The sequence spans 284 residues: MKLCDFEVGLDQPFFLIAGTCVVESEQMTIDTAGRLKEICEKLNVPFIYKSSYDKANRSSGKSFRGLGMDEGLRILGEVKRQLGLPVLTDVHSIDEIEQVASVVDVLQTPAFLCRQTDFIHACARSGKPVNIKKGQFLAPHDMKNVIDKARDAARDAGLSEDRFMACERGVSFGYNNLVSDMRSLAIMRETNAPVVFDATHSVQLPGGQGTSSGGQREFVPVLARAAVATGVAGLFMETHPNPAEAKSDGPNAVPLNRMGALLETLVTLDQAVKRNPFLENDFN.

This sequence belongs to the KdsA family.

The protein localises to the cytoplasm. The catalysed reaction is D-arabinose 5-phosphate + phosphoenolpyruvate + H2O = 3-deoxy-alpha-D-manno-2-octulosonate-8-phosphate + phosphate. It functions in the pathway carbohydrate biosynthesis; 3-deoxy-D-manno-octulosonate biosynthesis; 3-deoxy-D-manno-octulosonate from D-ribulose 5-phosphate: step 2/3. The protein operates within bacterial outer membrane biogenesis; lipopolysaccharide biosynthesis. The sequence is that of 2-dehydro-3-deoxyphosphooctonate aldolase from Burkholderia cenocepacia (strain HI2424).